The chain runs to 571 residues: Proline--tRNA ligase (571 aa).

Belongs to the class-II aminoacyl-tRNA synthetase family. ProS type 1 subfamily. Homodimer.

It localises to the cytoplasm. It catalyses the reaction tRNA(Pro) + L-proline + ATP = L-prolyl-tRNA(Pro) + AMP + diphosphate. Catalyzes the attachment of proline to tRNA(Pro) in a two-step reaction: proline is first activated by ATP to form Pro-AMP and then transferred to the acceptor end of tRNA(Pro). As ProRS can inadvertently accommodate and process non-cognate amino acids such as alanine and cysteine, to avoid such errors it has two additional distinct editing activities against alanine. One activity is designated as 'pretransfer' editing and involves the tRNA(Pro)-independent hydrolysis of activated Ala-AMP. The other activity is designated 'posttransfer' editing and involves deacylation of mischarged Ala-tRNA(Pro). The misacylated Cys-tRNA(Pro) is not edited by ProRS. In Ligilactobacillus salivarius (strain UCC118) (Lactobacillus salivarius), this protein is Proline--tRNA ligase.